We begin with the raw amino-acid sequence, 215 residues long: MAPGMRVCLLLLIAFTLLGPQRAAAFPAMPLSSLFANAVLRAQHLHQLVADTYKEFERTYIPEAQRHSIQSTQTAFCFSETIPAPTGKDEAQQRSDVELLRFSLLLIQSWLSPVQFLSRVFTNSLVFGTSDRVYEKLRDLEEGIQALMQELEDGSSRGGLVLKTTYDKFDTNLRSDEALLKNYGLLSCFKKDLHKAETYLRVMECRRFVESSCAF.

Residues 1-25 (MAPGMRVCLLLLIAFTLLGPQRAAA) form the signal peptide. His-44 serves as a coordination point for Zn(2+). A Phosphoserine modification is found at Ser-130. Zn(2+) is bound at residue Glu-197.

Belongs to the somatotropin/prolactin family.

Its subcellular location is the secreted. In terms of biological role, plays an important role in growth control. Its major role in stimulating body growth is to stimulate the liver and other tissues to secrete IGF1. It stimulates both the differentiation and proliferation of myoblasts. It also stimulates amino acid uptake and protein synthesis in muscle and other tissues. The chain is Somatotropin (GH1) from Monodelphis domestica (Gray short-tailed opossum).